The following is a 629-amino-acid chain: tRNA uridine 5-carboxymethylaminomethyl modification enzyme MnmG (629 aa).

Residues 13–18, Val125, and Ser180 each bind FAD; that span reads GGGHAG. Position 273 to 287 (273 to 287) interacts with NAD(+); sequence GPRYCPSIEDKVMRF. Gln370 contacts FAD.

This sequence belongs to the MnmG family. Homodimer. Heterotetramer of two MnmE and two MnmG subunits. Requires FAD as cofactor.

The protein resides in the cytoplasm. NAD-binding protein involved in the addition of a carboxymethylaminomethyl (cmnm) group at the wobble position (U34) of certain tRNAs, forming tRNA-cmnm(5)s(2)U34. In Serratia proteamaculans (strain 568), this protein is tRNA uridine 5-carboxymethylaminomethyl modification enzyme MnmG.